Here is a 345-residue protein sequence, read N- to C-terminus: Acyl-CoA--sterol O-acyltransferase 1 (345 aa).

Helical transmembrane passes span 1–21 (MASF…TFFI), 32–52 (LILF…IYSL), 54–74 (LLGI…LLFA), 86–106 (PLSL…QLSP), 120–140 (GPLI…AYEY), 148–168 (VVLT…LAAT), 231–251 (ILAA…IFFY), 258–278 (DWKM…EIAI), and 291–311 (AISQ…LFLP).

The protein belongs to the wax synthase family.

The protein resides in the membrane. Its function is as follows. Involved in the esterification of cycloartenol. Not implicated in the formation of sterol esters in flowers or during seed maturation. Has a substrate preference toward saturated fatty acyl donors (16:0 &gt; 18:0 &gt; 16:1 &gt; 18:1). Does not require triacyglycerols (TAGs) as a fatty acyl donor, and is unable to acylate diacylglycerol to produce TAG. The chain is Acyl-CoA--sterol O-acyltransferase 1 (ASAT1) from Arabidopsis thaliana (Mouse-ear cress).